Here is a 764-residue protein sequence, read N- to C-terminus: 5-methyltetrahydropteroyltriglutamate--homocysteine methyltransferase (764 aa).

5-methyltetrahydropteroyltri-L-glutamate-binding positions include arginine 16–lysine 19 and lysine 121. Residues isoleucine 440 to serine 442 and glutamate 493 contribute to the L-homocysteine site. L-methionine is bound by residues isoleucine 440–serine 442 and glutamate 493. Residues arginine 524–cysteine 525 and tryptophan 570 contribute to the 5-methyltetrahydropteroyltri-L-glutamate site. Aspartate 608 provides a ligand contact to L-homocysteine. An L-methionine-binding site is contributed by aspartate 608. 5-methyltetrahydropteroyltri-L-glutamate is bound at residue glutamate 614. Residues histidine 650, cysteine 652, and glutamate 674 each contribute to the Zn(2+) site. Catalysis depends on histidine 703, which acts as the Proton donor. Cysteine 735 lines the Zn(2+) pocket.

Belongs to the vitamin-B12 independent methionine synthase family. It depends on Zn(2+) as a cofactor.

It catalyses the reaction 5-methyltetrahydropteroyltri-L-glutamate + L-homocysteine = tetrahydropteroyltri-L-glutamate + L-methionine. Its pathway is amino-acid biosynthesis; L-methionine biosynthesis via de novo pathway; L-methionine from L-homocysteine (MetE route): step 1/1. Its function is as follows. Catalyzes the transfer of a methyl group from 5-methyltetrahydrofolate to homocysteine resulting in methionine formation. In Burkholderia orbicola (strain MC0-3), this protein is 5-methyltetrahydropteroyltriglutamate--homocysteine methyltransferase.